A 106-amino-acid polypeptide reads, in one-letter code: Small ribosomal subunit protein uS10 (106 aa).

This sequence belongs to the universal ribosomal protein uS10 family. In terms of assembly, part of the 30S ribosomal subunit.

Involved in the binding of tRNA to the ribosomes. This chain is Small ribosomal subunit protein uS10, found in Prochlorococcus marinus (strain MIT 9515).